The primary structure comprises 359 residues: 4-hydroxy-3-methylbut-2-en-1-yl diphosphate synthase (flavodoxin) (359 aa).

[4Fe-4S] cluster contacts are provided by Cys264, Cys267, Cys299, and Glu306.

This sequence belongs to the IspG family. [4Fe-4S] cluster is required as a cofactor.

It catalyses the reaction (2E)-4-hydroxy-3-methylbut-2-enyl diphosphate + oxidized [flavodoxin] + H2O + 2 H(+) = 2-C-methyl-D-erythritol 2,4-cyclic diphosphate + reduced [flavodoxin]. It participates in isoprenoid biosynthesis; isopentenyl diphosphate biosynthesis via DXP pathway; isopentenyl diphosphate from 1-deoxy-D-xylulose 5-phosphate: step 5/6. In terms of biological role, converts 2C-methyl-D-erythritol 2,4-cyclodiphosphate (ME-2,4cPP) into 1-hydroxy-2-methyl-2-(E)-butenyl 4-diphosphate. The polypeptide is 4-hydroxy-3-methylbut-2-en-1-yl diphosphate synthase (flavodoxin) (Mycoplasmoides gallisepticum (strain R(low / passage 15 / clone 2)) (Mycoplasma gallisepticum)).